The following is an 88-amino-acid chain: Small ribosomal subunit protein bS20 (88 aa).

Disordered regions lie at residues M1–R29 and K69–A88.

This sequence belongs to the bacterial ribosomal protein bS20 family.

Binds directly to 16S ribosomal RNA. The polypeptide is Small ribosomal subunit protein bS20 (Polynucleobacter asymbioticus (strain DSM 18221 / CIP 109841 / QLW-P1DMWA-1) (Polynucleobacter necessarius subsp. asymbioticus)).